The following is a 380-amino-acid chain: Alkaline protease (380 aa).

The first 27 residues, 1–27, serve as a signal peptide directing secretion; that stretch reads MKKPLGKIVASTALLISVAFSSSIASA. Positions 28-112 are excised as a propeptide; it reads AEEAKEKYLI…EEDAEVTTMA (85 aa). In terms of domain architecture, Inhibitor I9 spans 34 to 111; it reads KYLIGFNEQE…IEEDAEVTTM (78 aa). Residue glutamine 113 coordinates Ca(2+). In terms of domain architecture, Peptidase S8 spans 116-379; sequence PWGISRVQAP…SGLVNAEAAT (264 aa). Aspartate 143 acts as the Charge relay system in catalysis. Aspartate 151 contributes to the Ca(2+) binding site. Histidine 173 functions as the Charge relay system in the catalytic mechanism. Ca(2+) is bound by residues leucine 184, asparagine 186, isoleucine 188, valine 190, alanine 274, tyrosine 276, and alanine 279. The active-site Charge relay system is the serine 326.

Belongs to the peptidase S8 family. Ca(2+) is required as a cofactor.

The protein resides in the secreted. This chain is Alkaline protease, found in Alkalihalobacillus alcalophilus (Bacillus alcalophilus).